The chain runs to 250 residues: AA9 family lytic polysaccharide monooxygenase B (250 aa).

Residues 1 to 21 (MTLSKITSIAGLLASASLVAG) form the signal peptide. The Cu(2+) site is built by His-22 and His-107. A Methylhistidine modification is found at His-22. 2 disulfide bridges follow: Cys-77-Cys-199 and Cys-118-Cys-122. The N-linked (GlcNAc...) asparagine glycan is linked to Asn-159. O2 is bound by residues His-185 and Gln-194. Tyr-196 is a binding site for Cu(2+).

This sequence belongs to the polysaccharide monooxygenase AA9 family. The cofactor is Cu(2+). The catalytically essential N-terminal histidine His-22 is post-translationally modified by methylation to prevent protonation of the histidine side chain, and protect the critical active site of the enzyme from oxidative damage.

The protein localises to the secreted. It catalyses the reaction [(1-&gt;4)-beta-D-glucosyl]n+m + reduced acceptor + O2 = 4-dehydro-beta-D-glucosyl-[(1-&gt;4)-beta-D-glucosyl]n-1 + [(1-&gt;4)-beta-D-glucosyl]m + acceptor + H2O.. Its function is as follows. Lytic polysaccharide monooxygenase (LPMO) that depolymerizes crystalline and amorphous polysaccharides via the oxidation of scissile alpha- or beta-(1-4)-glycosidic bonds, yielding C1 and C4 oxidation products. Catalysis by LPMOs requires the reduction of the active-site copper from Cu(II) to Cu(I) by a reducing agent and H(2)O(2) or O(2) as a cosubstrate. Shows activity on phosphoric acid swollen cellulose, on NaOH pretreated soy spent flakes as well as on crystalline cellulose (Avicel). Does not have a positive effect on cel6A activity, but acts synergistically with endoglucanase egl7. In Aspergillus fumigatus (strain ATCC MYA-4609 / CBS 101355 / FGSC A1100 / Af293) (Neosartorya fumigata), this protein is AA9 family lytic polysaccharide monooxygenase B.